The chain runs to 340 residues: Solute-binding protein Dde_0634 (340 aa).

Residues 1–29 form the signal peptide; the sequence is MKSTFAALLIMVGCLVSGALLTGSEAAAA. Residues tyrosine 99, arginine 172, 210–213, and tyrosine 235 each bind (indol-3-yl)acetate; that span reads TSLD.

It belongs to the bacterial solute-binding protein 7 family. In terms of assembly, the complex is comprised of an extracytoplasmic solute-binding protein and a heteromeric permease formed by two transmembrane proteins.

The protein resides in the periplasm. Its function is as follows. Solute-binding protein that binds indole-3-pyruvate and indole-3-acetate (in vitro). Can also bind D-tryptophan (in vitro), but that is probably not a physiological ligand. Probably part of a tripartite ATP-independent periplasmic (TRAP) transport system that mediates solute transport into the cytoplasm. The sequence is that of Solute-binding protein Dde_0634 from Oleidesulfovibrio alaskensis (strain ATCC BAA-1058 / DSM 17464 / G20) (Desulfovibrio alaskensis).